The primary structure comprises 133 residues: Ribonuclease P protein component (133 aa).

The protein belongs to the RnpA family. In terms of assembly, consists of a catalytic RNA component (M1 or rnpB) and a protein subunit.

The catalysed reaction is Endonucleolytic cleavage of RNA, removing 5'-extranucleotides from tRNA precursor.. Functionally, RNaseP catalyzes the removal of the 5'-leader sequence from pre-tRNA to produce the mature 5'-terminus. It can also cleave other RNA substrates such as 4.5S RNA. The protein component plays an auxiliary but essential role in vivo by binding to the 5'-leader sequence and broadening the substrate specificity of the ribozyme. The polypeptide is Ribonuclease P protein component (Corynebacterium efficiens (strain DSM 44549 / YS-314 / AJ 12310 / JCM 11189 / NBRC 100395)).